The primary structure comprises 667 residues: UvrABC system protein C (667 aa).

Residues 43–122 (AEPGCYLMRD…IKNQQPHFNV (80 aa)) enclose the GIY-YIG domain. The 36-residue stretch at 232–267 (QELKVLLEKQMERYSDRMDYESAANIRDQIKGLEQL) folds into the UVR domain.

The protein belongs to the UvrC family. In terms of assembly, interacts with UvrB in an incision complex.

Its subcellular location is the cytoplasm. Its function is as follows. The UvrABC repair system catalyzes the recognition and processing of DNA lesions. UvrC both incises the 5' and 3' sides of the lesion. The N-terminal half is responsible for the 3' incision and the C-terminal half is responsible for the 5' incision. The protein is UvrABC system protein C of Prochlorococcus marinus (strain MIT 9313).